The chain runs to 299 residues: UDP-N-acetylenolpyruvoylglucosamine reductase (299 aa).

In terms of domain architecture, FAD-binding PCMH-type spans 28–193 (IGGPVDLMVL…VSALMQLHKE (166 aa)). Arg-172 is an active-site residue. Ser-222 serves as the catalytic Proton donor. Glu-292 is an active-site residue.

Belongs to the MurB family. FAD is required as a cofactor.

It localises to the cytoplasm. The catalysed reaction is UDP-N-acetyl-alpha-D-muramate + NADP(+) = UDP-N-acetyl-3-O-(1-carboxyvinyl)-alpha-D-glucosamine + NADPH + H(+). It functions in the pathway cell wall biogenesis; peptidoglycan biosynthesis. Functionally, cell wall formation. The sequence is that of UDP-N-acetylenolpyruvoylglucosamine reductase from Syntrophomonas wolfei subsp. wolfei (strain DSM 2245B / Goettingen).